A 280-amino-acid polypeptide reads, in one-letter code: Hydroxyethylthiazole kinase (280 aa).

Met50 lines the substrate pocket. Residues Lys125 and Thr178 each coordinate ATP. Substrate is bound at residue Gly205.

The protein belongs to the Thz kinase family. It depends on Mg(2+) as a cofactor.

The catalysed reaction is 5-(2-hydroxyethyl)-4-methylthiazole + ATP = 4-methyl-5-(2-phosphooxyethyl)-thiazole + ADP + H(+). It participates in cofactor biosynthesis; thiamine diphosphate biosynthesis; 4-methyl-5-(2-phosphoethyl)-thiazole from 5-(2-hydroxyethyl)-4-methylthiazole: step 1/1. Catalyzes the phosphorylation of the hydroxyl group of 4-methyl-5-beta-hydroxyethylthiazole (THZ). The protein is Hydroxyethylthiazole kinase of Lacticaseibacillus casei (strain BL23) (Lactobacillus casei).